The primary structure comprises 1086 residues: Ribonuclease 3 (1086 aa).

Disordered regions lie at residues 1 to 77 (MSDE…DSPR) and 158 to 233 (CHSM…LRNF). Positions 13 to 23 (PKHKRARRKKY) are enriched in basic residues. Positions 24-35 (QKEYQERHKEEM) are enriched in basic and acidic residues. Residues 43–53 (FQNQPSTSSAP) show a composition bias toward polar residues. Residues 159–168 (HSMKGRKTPK) show a composition bias toward basic residues. Positions 181–190 (VSDDSNDSQD) are enriched in acidic residues. The segment covering 191 to 201 (EASTSEPTNRQ) has biased composition (polar residues). Basic and acidic residues predominate over residues 203-217 (PEADKTGEVKDEKQT). RNase III domains are found at residues 607–781 (LDVF…LDGG) and 833–957 (FHAL…VDRG). Residues glutamate 694, asparagine 767, glutamate 770, glutamate 873, aspartate 943, and glutamate 946 each coordinate Mg(2+). Positions 984–1059 (DAKSHLQQWC…AELALANLES (76 aa)) constitute a DRBM domain.

This sequence belongs to the ribonuclease III family. Mg(2+) is required as a cofactor. Requires Mn(2+) as cofactor.

It is found in the nucleus. It carries out the reaction Endonucleolytic cleavage to 5'-phosphomonoester.. Executes the initial step of microRNA (miRNA) processing in the nucleus, that is the cleavage of pri-miRNA to release pre-miRNA. Involved in pre-rRNA processing. Cleaves double-strand RNA and does not cleave single-strand RNA. Involved in fertility. Required for the function or synthesis of the let-7 miRNA. This is Ribonuclease 3 (drsh-1) from Caenorhabditis elegans.